A 122-amino-acid chain; its full sequence is Large ribosomal subunit protein uL14 (122 aa).

The protein belongs to the universal ribosomal protein uL14 family. In terms of assembly, part of the 50S ribosomal subunit. Forms a cluster with proteins L3 and L19. In the 70S ribosome, L14 and L19 interact and together make contacts with the 16S rRNA in bridges B5 and B8.

In terms of biological role, binds to 23S rRNA. Forms part of two intersubunit bridges in the 70S ribosome. This is Large ribosomal subunit protein uL14 from Staphylococcus epidermidis (strain ATCC 35984 / DSM 28319 / BCRC 17069 / CCUG 31568 / BM 3577 / RP62A).